A 614-amino-acid polypeptide reads, in one-letter code: Dihydroxy-acid dehydratase (614 aa).

Position 81 (Asp81) interacts with Mg(2+). [2Fe-2S] cluster is bound at residue Cys122. The Mg(2+) site is built by Asp123 and Lys124. An N6-carboxylysine modification is found at Lys124. Residue Cys193 participates in [2Fe-2S] cluster binding. Glu489 is a binding site for Mg(2+). The active-site Proton acceptor is the Ser515.

This sequence belongs to the IlvD/Edd family. Homodimer. The cofactor is [2Fe-2S] cluster. Mg(2+) serves as cofactor.

It catalyses the reaction (2R)-2,3-dihydroxy-3-methylbutanoate = 3-methyl-2-oxobutanoate + H2O. It carries out the reaction (2R,3R)-2,3-dihydroxy-3-methylpentanoate = (S)-3-methyl-2-oxopentanoate + H2O. It functions in the pathway amino-acid biosynthesis; L-isoleucine biosynthesis; L-isoleucine from 2-oxobutanoate: step 3/4. It participates in amino-acid biosynthesis; L-valine biosynthesis; L-valine from pyruvate: step 3/4. Functions in the biosynthesis of branched-chain amino acids. Catalyzes the dehydration of (2R,3R)-2,3-dihydroxy-3-methylpentanoate (2,3-dihydroxy-3-methylvalerate) into 2-oxo-3-methylpentanoate (2-oxo-3-methylvalerate) and of (2R)-2,3-dihydroxy-3-methylbutanoate (2,3-dihydroxyisovalerate) into 2-oxo-3-methylbutanoate (2-oxoisovalerate), the penultimate precursor to L-isoleucine and L-valine, respectively. The sequence is that of Dihydroxy-acid dehydratase from Marinomonas sp. (strain MWYL1).